We begin with the raw amino-acid sequence, 723 residues long: Malate synthase G (723 aa).

Residues V118, R125–Y126, S274, and R311 contribute to the acetyl-CoA site. R338 functions as the Proton acceptor in the catalytic mechanism. Glyoxylate contacts are provided by residues R338, E427, and G452–D455. Mg(2+)-binding residues include E427 and D455. P536 lines the acetyl-CoA pocket. Cysteine sulfenic acid (-SOH) is present on C617. The active-site Proton donor is D631. A Cysteine sulfenic acid (-SOH) modification is found at C688.

It belongs to the malate synthase family. GlcB subfamily. In terms of assembly, monomer. Mg(2+) is required as a cofactor.

Its subcellular location is the cytoplasm. The enzyme catalyses glyoxylate + acetyl-CoA + H2O = (S)-malate + CoA + H(+). It participates in carbohydrate metabolism; glyoxylate cycle; (S)-malate from isocitrate: step 2/2. In terms of biological role, involved in the glycolate utilization. Catalyzes the condensation and subsequent hydrolysis of acetyl-coenzyme A (acetyl-CoA) and glyoxylate to form malate and CoA. In Shigella flexneri, this protein is Malate synthase G.